The following is a 746-amino-acid chain: Protein C-mannosyl-transferase DPY19L1 (746 aa).

Residues 1 to 68 (MVLQARSKHR…RAGTAAPAPD (68 aa)) form a disordered region. Residues Ser-28 and Ser-31 each carry the phosphoserine modification. The span at 59–68 (RAGTAAPAPD) shows a compositional bias: low complexity. The next 11 membrane-spanning stretches (helical) occupy residues 137-159 (LYYSYFKTIVEAPSFLNGVWMIM), 227-247 (ACFYVAVIFMLNGLMMALFFI), 257-279 (LGGVVTVLCFFFNHGECTRVMWT), 307-325 (LCRGSLIALCISNVLFMLP), 331-350 (FVLLTQIASLFAVYVVGYID), 357-374 (IIYMHMISLVLCFVLMFG), 380-396 (TSYYASSLVIIWGMLAM), 405-425 (VSELSLWVIQGCGWLFGTVIL), 481-501 (LLLPVVLVTVAAIVRKIFNDM), 520-540 (GELVYHALQLLAYTALGVLIM), and 562-582 (LFGWLFGKVHPGAVVFAILAA).

Belongs to the dpy-19 family.

The protein resides in the endoplasmic reticulum membrane. The enzyme catalyses L-tryptophyl-[protein] + a di-trans,poly-cis-dolichyl beta-D-mannosyl phosphate = C-alpha-D-mannosyl-L-tryptophyl-[protein] + a di-trans,poly-cis-dolichyl phosphate + H(+). Its pathway is protein modification; protein glycosylation. Its function is as follows. C-mannosyltransferase that mediates the C-mannosylation tryptophan residues on target proteins. The reaction occurs on the luminal side of the endoplasmic reticulum and involves the transfer of a mannose unit from a dolichylphosphate mannose (Dol-P-Man) donor to an acceptor protein containing a WxxW consensus sequence. C-mannosylates the first two tryptophans in the WxxWxxWxxC sequence motif in thrombospondin (TSP) type-1 repeats of UNC5A. Regulates neurite extension during development. This is Protein C-mannosyl-transferase DPY19L1 (Dpy19l1) from Mus musculus (Mouse).